Consider the following 100-residue polypeptide: Large ribosomal subunit protein eL30 (100 aa).

Belongs to the eukaryotic ribosomal protein eL30 family.

The sequence is that of Large ribosomal subunit protein eL30 (rpl30e) from Aeropyrum pernix (strain ATCC 700893 / DSM 11879 / JCM 9820 / NBRC 100138 / K1).